The sequence spans 994 residues: Seizure protein 6 homolog (994 aa).

The first 19 residues, 1 to 19 (MRPVALLLLPSLLALLAHG), serve as a signal peptide directing secretion. Residues 20 to 925 (LSLEAPTVGK…AASSTLDAAH (906 aa)) are Extracellular-facing. Positions 28–50 (GKGQAPGIEETDGELTAAPTPEQ) are disordered. 2 O-glycosylated at two sites regions span residues 38-47 (TDGELTAAPT) and 59-63 (TTAPT). Disordered regions lie at residues 88-146 (LRPA…ESES), 171-191 (IAST…PGDM), and 241-261 (PGPC…PTDL). The span at 93 to 107 (PFQPDPPAPFTPSPL) shows a compositional bias: pro residues. Polar residues-rich tracts occupy residues 112-123 (NQDSRPVFTSPT) and 172-185 (ASTT…TPTQ). N-linked (GlcNAc...) asparagine glycosylation occurs at Asn289. In terms of domain architecture, Sushi 1 spans 355-414 (LSCHFPRRPAYGDVTVTSLHPGGSARFHCATGYQLKGARHLTCLNATQPFWDSKEPVCIA). 12 disulfide bridges follow: Cys357–Cys397, Cys383–Cys412, Cys416–Cys443, Cys532–Cys574, Cys559–Cys589, Cys593–Cys619, Cys710–Cys752, Cys738–Cys765, Cys771–Cys813, Cys799–Cys830, Cys838–Cys880, and Cys866–Cys895. Asn399, Asn436, and Asn541 each carry an N-linked (GlcNAc...) asparagine glycan. The CUB 1 domain occupies 416–527 (CGGVIRNATT…AGMALRYEAF (112 aa)). In terms of domain architecture, Sushi 2 spans 530–591 (GHCYEPFVKY…WNETEPACRA (62 aa)). Residues 593–704 (CSGEITDSAG…QGFVIHFFEV (112 aa)) enclose the CUB 2 domain. Sushi domains are found at residues 708–767 (DTCP…SCQR), 769–832 (TSCH…KCLL), and 836–897 (KPCH…ICRA). A helical transmembrane segment spans residues 926–946 (IAAAIFLPLVAMVLLVGGVYF). The Cytoplasmic segment spans residues 947–994 (YFSRLQGKSSLQLPRPRPRPYNRITIESAFDNPTYETGSLSFAGDERI).

The protein belongs to the SEZ6 family. Post-translationally, glycosylated.

It is found in the cell membrane. Functionally, may play a role in cell-cell recognition and in neuronal membrane signaling. Seems to be important for the achievement of the necessary balance between dendrite elongation and branching during the elaboration of a complex dendritic arbor. Involved in the development of appropriate excitatory synaptic connectivity. The chain is Seizure protein 6 homolog (SEZ6) from Homo sapiens (Human).